Consider the following 893-residue polypeptide: Dolichyl-phosphate-mannose--protein mannosyltransferase 1 (893 aa).

The next 7 membrane-spanning stretches (helical) occupy residues F29–A49, L77–T97, L124–P144, S147–M167, Y170–V190, A224–G244, and F258–V278. The MIR 1 domain maps to F310–E364. The N-linked (GlcNAc...) asparagine glycan is linked to N370. MIR domains follow at residues I374–L433 and N443–N499. Residue N443 is glycosylated (N-linked (GlcNAc...) asparagine). Phosphothreonine is present on T451. 3 consecutive transmembrane segments (helical) span residues F573–L593, Y610–L630, and A643–F663. N665 carries N-linked (GlcNAc...) asparagine glycosylation. A helical membrane pass occupies residues A671 to T691. N720 carries N-linked (GlcNAc...) asparagine glycosylation. The segment at K785–E893 is disordered. Basic and acidic residues predominate over residues A786–S806. Composition is skewed to low complexity over residues S807–V823 and M854–E864. Residues V868–S878 are compositionally biased toward polar residues.

It belongs to the glycosyltransferase 39 family.

Its subcellular location is the endoplasmic reticulum membrane. The protein resides in the nucleus membrane. It catalyses the reaction a di-trans,poly-cis-dolichyl beta-D-mannosyl phosphate + L-seryl-[protein] = 3-O-(alpha-D-mannosyl)-L-seryl-[protein] + a di-trans,poly-cis-dolichyl phosphate + H(+). The catalysed reaction is a di-trans,poly-cis-dolichyl beta-D-mannosyl phosphate + L-threonyl-[protein] = 3-O-(alpha-D-mannosyl)-L-threonyl-[protein] + a di-trans,poly-cis-dolichyl phosphate + H(+). Its pathway is protein modification; protein glycosylation. In terms of biological role, transfers mannose from Dol-P-mannose to Ser or Thr residues on proteins. Required for normal cell growth and septum formation. Shown to actively O-mannosylate wsc1. The chain is Dolichyl-phosphate-mannose--protein mannosyltransferase 1 (ogm1) from Schizosaccharomyces pombe (strain 972 / ATCC 24843) (Fission yeast).